The primary structure comprises 2057 residues: Fer-1-like protein 5 (2057 aa).

7 C2 domains span residues 1–99 (MLRL…VLFV), 152–265 (PGST…TLLR), 308–425 (DDTD…EGVY), 1057–1188 (DTRP…MRWH), 1213–1346 (KLGE…AQDY), 1467–1587 (PKPP…AHCG), and 1705–1853 (GPPG…KQCS). Residues D1502, D1508, D1557, F1558, D1559, S1562, D1565, D1824, S1827, and D1830 each coordinate Ca(2+). The helical transmembrane segment at 1962–1982 (LIAFMVISIIALMLFNFIYSA) threads the bilayer.

It belongs to the ferlin family. Interacts (via second C2 domain) with EHD1 and EHD2. Ca(2+) is required as a cofactor.

The protein localises to the cell membrane. It is found in the membrane. Functionally, plays a role in myoblast fusion; probable mediator of endocytic recycling for membrane trafficking events during myotube formation. This chain is Fer-1-like protein 5 (FER1L5), found in Homo sapiens (Human).